Here is a 754-residue protein sequence, read N- to C-terminus: MTILTHTLGFPRVGLRRELKKAQESYWAGNTTREALLAVGRELRARHWEQQKQAGIDLLPVGDFAWYDHVLTTSLLLGNVPARHQNNDGSVDIDTLFRIGRGRAPTGEPAAAAEMTKWFNTNYHYIVPEFSKGQQFRLTWTQLLEEVDEALALGHKIKPVLLGPVTYLWLGKVKGEPFDRLTLLKDILPVYQHVLAELAKRGIEWVQIDEPALVLELPQAWLDAFKPAYDALAGQVKLLLTTYFEGVTPNLDTIIALPVQGLHVDLIHGKDDVAELHQRLPVDWLLSAGLINGRNVWRADLTEKYAQINAIVGKRALWVASSCSLLHSPIDLSVETRLDTEVKSWFAFALQKCGELALLRDALNSGETAALEEWSAPIQARRHSRRVHNAAVEKRLAAITAQDSQRENPYEVRAEAQRARFKLPAWPTTTIGSFPQTTEIRGLRLDFKKGNLDANHYRTGIAEHIKQAIIEQERLGLDVLVHGEAERNDMVEYFGEHLDGFVFTQNGWVQSYGSRCVKPPVVIGDISRPAPITVEWAKYAQSLTDKPVKGMLTGPVTILCWSFPREDVTRETIAKQIALALRDEVADLEAAGIGIIQIDEPALREGLPLRRSDWDAYLEWGVEAFRINAAVAKDETQIHTHMCYCEFNDIMDSIAALDADVITIETSRSDMELLESFEAFDYPNEIGPGVYDIHSPNVPSVEWIEALLKKAAQRIPAQRLWVNPDCGLKTRGWPETRAALANMVKAAHNLRQAK.

5-methyltetrahydropteroyltri-L-glutamate contacts are provided by residues 17–20 (RELK) and Lys117. Residues 431–433 (IGS) and Glu484 each bind L-homocysteine. L-methionine-binding positions include 431-433 (IGS) and Glu484. 5-methyltetrahydropteroyltri-L-glutamate contacts are provided by residues 515 to 516 (RC) and Trp561. An L-homocysteine-binding site is contributed by Asp599. Asp599 is a binding site for L-methionine. Glu605 contributes to the 5-methyltetrahydropteroyltri-L-glutamate binding site. Zn(2+) contacts are provided by His641, Cys643, and Glu665. The active-site Proton donor is the His694. Cys726 is a Zn(2+) binding site.

The protein belongs to the vitamin-B12 independent methionine synthase family. Zn(2+) is required as a cofactor.

The catalysed reaction is 5-methyltetrahydropteroyltri-L-glutamate + L-homocysteine = tetrahydropteroyltri-L-glutamate + L-methionine. Its pathway is amino-acid biosynthesis; L-methionine biosynthesis via de novo pathway; L-methionine from L-homocysteine (MetE route): step 1/1. Catalyzes the transfer of a methyl group from 5-methyltetrahydrofolate to homocysteine resulting in methionine formation. The polypeptide is 5-methyltetrahydropteroyltriglutamate--homocysteine methyltransferase (Salmonella typhimurium (strain LT2 / SGSC1412 / ATCC 700720)).